Here is a 136-residue protein sequence, read N- to C-terminus: Nucleoside diphosphate kinase (136 aa).

Residues Lys10, Phe58, Arg86, Thr92, Arg104, and Asn114 each coordinate ATP. His117 acts as the Pros-phosphohistidine intermediate in catalysis.

It belongs to the NDK family. Homotetramer. Mg(2+) is required as a cofactor.

Its subcellular location is the cytoplasm. It carries out the reaction a 2'-deoxyribonucleoside 5'-diphosphate + ATP = a 2'-deoxyribonucleoside 5'-triphosphate + ADP. The catalysed reaction is a ribonucleoside 5'-diphosphate + ATP = a ribonucleoside 5'-triphosphate + ADP. In terms of biological role, major role in the synthesis of nucleoside triphosphates other than ATP. The ATP gamma phosphate is transferred to the NDP beta phosphate via a ping-pong mechanism, using a phosphorylated active-site intermediate. The polypeptide is Nucleoside diphosphate kinase (Mycobacterium avium (strain 104)).